The primary structure comprises 777 residues: MKRLTFGACICCLLSLMACSQKAKQVQIPEYDKGINIIPLPMQLTESDDSFEVDDKTTICVSAEELKPIAKLLADKLRASADLSLQIEIGEEPSGNAIYIGVDTALPLKEEGYMLRSDKRGVSIIGKSAHGAFYGMQTLLQLLPAEVESSNEVLLPMTVPGVEIKDEPAFGYRGFMLDVCRHFLSVEDIKKHIDIMAMFKINRFHWHLTEDQAWRIEIKKYPRLTEVGSTRTEGDGTQYSGFYTQEQVRDIVQYASDRFITVIPEIEMPGHAMAALAAYPQLACFPREFKPRIIWGVEQDVYCAGKDSVFRFISDVIDEVAPLFPGTYFHIGGDECPKDRWKACSLCQKRMRDNGLKDEHELQSYFIKQAEKVLQKHGKRLIGWDEILEGGLAPSATVMSWRGEDGGIAAANMNHDVIMTPGSGGLYLDHYQGDPTVEPVAIGGYAPLEQVYAYNPLPKELPADKHRYVLGAQANLWAEYLYTSERYDYQAYPRLLAVAELTWTPLAKKDFADFCRRLDNACVRLDMHGINYHIPLPEQPGGSSDFIAFTDKAKLTFTTSRPMKMVYTLDETEPTLTSTPYTVPLEFAQTGLLKIRTVTAGGKMSPVRRIRVEKQPFNMSMEVPAPKPGLTIRTAYGDLYDVPDLQQVASWEVGTVSSLEEIMHGKEKITSPEVLERRVVEATGYVLIPEDGVYEFSTENNEFWIDNVKLIDNVGEVKKFSRRNSSRALQKGYHPIKTIWVGAIQGGWPTYWNYSRVMIRLKGEEKFKPISSDMLFQ.

The signal sequence occupies residues Met-1–Ala-18. A lipid anchor (N-palmitoyl cysteine) is attached at Cys-19. Residue Cys-19 is the site of S-diacylglycerol cysteine attachment. The region spanning Ala-625–Lys-766 is the PA14 domain.

Belongs to the glycosyl hydrolase 20 family.

The protein localises to the cell outer membrane. It catalyses the reaction Hydrolysis of terminal non-reducing N-acetyl-D-hexosamine residues in N-acetyl-beta-D-hexosaminides.. The polypeptide is Beta-hexosaminidase (nahA) (Porphyromonas gingivalis (strain ATCC BAA-308 / W83)).